A 257-amino-acid chain; its full sequence is Nopaline permease ATP-binding protein P (257 aa).

The ABC transporter domain maps to 8-253; it reads LVAEDVHKNF…PTSPRCRAFL (246 aa). 40-47 serves as a coordination point for ATP; it reads GSSGSGKS.

The protein belongs to the ABC transporter superfamily.

The protein localises to the cell inner membrane. In terms of biological role, component of the nopaline active transport system probably consisting of four subunits: Q, M, P and T. This system is also capable of transporting octopine provided that catabolic functions are induced with nopaline. This is Nopaline permease ATP-binding protein P (nocP) from Agrobacterium fabrum (strain C58 / ATCC 33970) (Agrobacterium tumefaciens (strain C58)).